Consider the following 331-residue polypeptide: Flotillin-like protein FloA (331 aa).

2 helical membrane passes run 6–26 and 28–48; these read LMILAIVAVAIIVLAVFFTFV and VMLWISALAAGVKISIFTLVG. The segment at 236 to 331 is required for correct localization; sequence QTDQAEADKN…KDPSDEDRKS (96 aa). 4 short sequence motifs (EA repeat) span residues 240–242, 251–253, 278–282, and 288–290; these read AEA, AEE, and EAEAE. The tract at residues 312 to 331 is disordered; that stretch reads EMRDSFGKLTKDPSDEDRKS.

It belongs to the flotillin-like FloA family. As to quaternary structure, homooligomerizes. Interacts with FloT. Interacts with FtsH midcell. Interacts with PhoR, colocalizes with PhoR in FloA-only membrane rafts.

Its subcellular location is the cell membrane. It is found in the membrane raft. In terms of biological role, found in functional membrane microdomains (FMM) that may be equivalent to eukaryotic membrane rafts. FMMs are highly dynamic and increase in number as cells age. FloA and FloT function is partially redundant; double deletions have marked synthetic phenotypes. Flotillins are thought to be important factors in membrane fluidity, especially during periods of rapid growth in rich media. Whether specific proteins are associated with FMMs is controversial; in one study FloT rafts have been shown to include proteins involved in adaptation to stationary phase, while FloA-FloT rafts include proteins involved in differentiation including sporulation, biofilm formation and DNA uptake competence. Another (more finely resolved) study only showed association of NfeD2 with FloT rafts of all the proteins examined. Involved in spatial organization of membranes, perhaps recruiting proteins to specific membrane regions. Simultaneous overexpression of both FloA and FloT leads to defects in cell division and differentiation, in part caused by stabilization of FtsH and its subsequent increased ability to degrade proteins. Cells make more biofilm, are about half as long, have less EzrA and more frequent Z-rings. The polypeptide is Flotillin-like protein FloA (Bacillus subtilis (strain 168)).